The primary structure comprises 665 residues: Succinate dehydrogenase [ubiquinone] flavoprotein subunit B, mitochondrial (665 aa).

Residues 1–45 (MALLKVAPSRLLSRALQLTSTLQNCTATSIAARRNFHFTVYGRKD) constitute a mitochondrion transit peptide. 5 residues coordinate FAD: Ala-72, Ala-75, Thr-94, Lys-95, and Ser-101. Tele-8alpha-FAD histidine is present on His-102. FAD contacts are provided by Thr-103, Gly-108, Ala-224, and Asp-278. Residues His-299, Arg-343, and His-410 each contribute to the oxaloacetate site. Arg-343 serves as the catalytic Proton acceptor. An FAD-binding site is contributed by Glu-443. Residues Arg-454 and Ala-457 each coordinate oxaloacetate. 2 residues coordinate FAD: Ser-459 and Leu-460.

Belongs to the FAD-dependent oxidoreductase 2 family. FRD/SDH subfamily. As to quaternary structure, component of complex II composed of four subunits: a flavoprotein (FP), an iron-sulfur protein (IP), and a cytochrome b composed of a large and a small subunit. FAD is required as a cofactor.

The protein resides in the mitochondrion inner membrane. It catalyses the reaction a ubiquinone + succinate = a ubiquinol + fumarate. The catalysed reaction is (R)-malate + a quinone = enol-oxaloacetate + a quinol. The enzyme catalyses (S)-malate + a quinone = enol-oxaloacetate + a quinol. Its pathway is carbohydrate metabolism; tricarboxylic acid cycle; fumarate from succinate (eukaryal route): step 1/1. Its activity is regulated as follows. Enol-oxaloacetate inhibits the succinate dehydrogenase activity. In terms of biological role, flavoprotein (FP) subunit of succinate dehydrogenase (SDH) that is involved in complex II of the mitochondrial electron transport chain and is responsible for transferring electrons from succinate to ubiquinone (coenzyme Q). SDH also oxidizes malate to the non-canonical enol form of oxaloacetate, enol-oxaloacetate. Enol-oxaloacetate, which is a potent inhibitor of the succinate dehydrogenase activity, is further isomerized into keto-oxaloacetate. This Xenopus laevis (African clawed frog) protein is Succinate dehydrogenase [ubiquinone] flavoprotein subunit B, mitochondrial (sdha-b).